Here is a 163-residue protein sequence, read N- to C-terminus: Globin CTT-Z (163 aa).

The N-terminal stretch at 1-16 is a signal peptide; that stretch reads MKFFAVLALCIVGAIA. The Globin domain maps to 18-162; the sequence is PLTSDEAALV…VYTAVFQIVT (145 aa). Positions 76 and 111 each coordinate heme b.

This sequence belongs to the globin family.

This Chironomus thummi thummi (Midge) protein is Globin CTT-Z (CTT-Z).